Consider the following 895-residue polypeptide: Clathrin interactor EPSIN 2 (895 aa).

In terms of domain architecture, ENTH spans 18 to 150 (KKVLKVPGVE…NDKERIAEVR (133 aa)). Composition is skewed to basic and acidic residues over residues 150–161 (RQKAAANRDKYR), 177–236 (DKYD…RSRS), and 245–257 (RSSEREREDDGHS). The interval 150–396 (RQKAAANRDK…PTVTSMSAPT (247 aa)) is disordered. Residues serine 270 and serine 282 each carry the phosphoserine modification. Residues 329–348 (AAPEAASPPTGTNTANTTAT) are compositionally biased toward low complexity. Composition is skewed to polar residues over residues 349–358 (FVNESPSQKV) and 387–396 (PTVTSMSAPT). A Clathrin binding motif is present at residues 409-413 (LADVF). 2 disordered regions span residues 436–533 (AGPA…PQEQ) and 758–784 (KQTNTPATSTINMGKAMGSGTGLGRSG). The segment covering 440–454 (PSFSTSQPSTQSFDD) has biased composition (low complexity). The ALPHA-ADR binding signature appears at 454-456 (DPF). Composition is skewed to polar residues over residues 464–479 (FTSTDTDSTPQQNFGA), 515–533 (PASQNVQPPSNSPGFPQEQ), and 759–769 (QTNTPATSTIN).

This sequence belongs to the epsin family. Interacts with clathrin, VTI12, DELTA-ADR and ALPHA-ADR.

It is found in the golgi apparatus. The protein resides in the cytoplasmic vesicle. It localises to the clathrin-coated vesicle. May have a role in transport via clathrin-coated vesicles from the trans-Golgi network to endosomes. Stimulates clathrin assembly. Binds to membranes enriched in phosphatidylinositol 3-phosphate (PtdIns(3)P). Plays an important role in protein trafficking. The protein is Clathrin interactor EPSIN 2 (EPSIN2) of Arabidopsis thaliana (Mouse-ear cress).